A 132-amino-acid chain; its full sequence is Large-conductance mechanosensitive channel (132 aa).

The next 2 membrane-spanning stretches (helical) occupy residues 10 to 30 (FAVKGNVIDMAVGVVIGSAFG) and 76 to 96 (GNFIQVTIDFLIIAFCIFLAI).

This sequence belongs to the MscL family. Homopentamer.

It localises to the cell inner membrane. Channel that opens in response to stretch forces in the membrane lipid bilayer. May participate in the regulation of osmotic pressure changes within the cell. The polypeptide is Large-conductance mechanosensitive channel (Campylobacter hominis (strain ATCC BAA-381 / DSM 21671 / CCUG 45161 / LMG 19568 / NCTC 13146 / CH001A)).